The primary structure comprises 848 residues: Adenylate cyclase (848 aa).

Residues 1 to 535 are catalytic; sequence MYLYIETLKQ…DVSHHFPLRL (535 aa). The tract at residues 541–848 is regulatory; it reads KALYSPCEIR…DAPLLQQYFS (308 aa). His609 carries the phosphohistidine; by CRR modification.

Belongs to the adenylyl cyclase class-1 family.

It localises to the cytoplasm. The catalysed reaction is ATP = 3',5'-cyclic AMP + diphosphate. The protein is Adenylate cyclase (cyaA) of Salmonella typhi.